The sequence spans 391 residues: Oxytocin receptor (391 aa).

At 1-38 (MEGAFAANWSAEAVNGSAAPPGTEGNRTAGPPQRNEAL) the chain is on the extracellular side. Residues Asn-8, Asn-15, and Asn-26 are each glycosylated (N-linked (GlcNAc...) asparagine). Residues 39–63 (ARVEVAVLCLILFLALSGNACVLLA) traverse the membrane as a helical segment. The Cytoplasmic segment spans residues 64-74 (LRTTRHKHSRL). Residues 75–97 (FFFMKHLSIADLVVAVFQVLPQL) traverse the membrane as a helical segment. At 98–113 (LWDITFRFYGPDLLCR) the chain is on the extracellular side. Cysteines 112 and 187 form a disulfide. Residues 114 to 135 (LVKYLQVVGMFASTYLLLLMSL) traverse the membrane as a helical segment. At 136 to 154 (DRCLAICQPLRSLSRRTDR) the chain is on the cytoplasmic side. A helical membrane pass occupies residues 155–175 (LAVLVTWLGCLVASAPQVHIF). Residues 176–202 (SLREVADGVFDCWAVFIQPWGPKAYIT) lie on the Extracellular side of the membrane. A helical transmembrane segment spans residues 203 to 225 (WITLAVYIVPVIVLATCYGLISF). Residues 226 to 277 (KIWQNLRLKTAAAAAEAAAGAEGEAADWAGRAILARVSNVKLISKAKIRTVK) are Cytoplasmic-facing. The helical transmembrane segment at 278–296 (MTFIVVLAFIVCWTPFFFV) threads the bilayer. Topologically, residues 297-311 (QMWSVWDADAPKEAS) are extracellular. A helical membrane pass occupies residues 312-334 (PFIIAMLLASLNSCCNPWIYMLF). Topologically, residues 335-391 (TGHLFQELVQRFLCCSFRRLKGSRPGETSVSKKSNSSTFVLSQYSSSQRRCSQPSTL) are cytoplasmic. 2 positions are modified to phosphoserine: Ser-368 and Ser-370.

The protein belongs to the G-protein coupled receptor 1 family. Vasopressin/oxytocin receptor subfamily.

The protein resides in the cell membrane. Its function is as follows. Receptor for oxytocin. The activity of this receptor is mediated by G proteins which activate a phosphatidylinositol-calcium second messenger system. The polypeptide is Oxytocin receptor (OXTR) (Bos taurus (Bovine)).